Consider the following 700-residue polypeptide: uncharacterized protein (700 aa).

Residues Cys-307, Cys-310, Cys-314, and Cys-558 each coordinate [4Fe-4S] cluster.

It belongs to the AOR/FOR family. It depends on [4Fe-4S] cluster as a cofactor. Mo-molybdopterin is required as a cofactor. Requires tungstopterin as cofactor.

This is an uncharacterized protein from Escherichia coli (strain K12).